Reading from the N-terminus, the 361-residue chain is Large-conductance mechanosensitive channel MscMJLR (361 aa).

Transmembrane regions (helical) follow at residues 20-40 (ILSL…NALI), 65-85 (LPVA…FLYL), 89-109 (LKTA…VVFF), 137-157 (IVVL…LLLI), and 177-197 (LAVA…LIIL).

It belongs to the MscS (TC 1.A.23) family.

The protein localises to the cell membrane. Functionally, large-conductance mechanosensitive channel that opens in response to stretch forces in the membrane lipid bilayer. Selective for cations. Rectifies with voltage. This Methanocaldococcus jannaschii (strain ATCC 43067 / DSM 2661 / JAL-1 / JCM 10045 / NBRC 100440) (Methanococcus jannaschii) protein is Large-conductance mechanosensitive channel MscMJLR.